Reading from the N-terminus, the 474-residue chain is E3 ubiquitin-protein ligase RNF14 (474 aa).

Residues 11-137 enclose the RWD domain; the sequence is DELLALASIY…QFLKEETLAY (127 aa). The D-box signature appears at 37–45; that stretch reads RIYLDLPQN. The tract at residues 216-457 is TRIAD supradomain; that stretch reads KLFLCSICFC…DPGSPCFNRL (242 aa). 15 residues coordinate Zn(2+): C220, C223, C238, H240, C243, C246, C265, C270, C309, C314, C329, C332, C337, C340, and H345. The segment at 220 to 270 adopts an RING-type 1 zinc-finger fold; it reads CSICFCEKLGSECMYFLECRHVYCKACLKDYFEIQIRDGQVQCLNCPEPKC. The IBR-type zinc-finger motif lies at 289–350; it reads ARYDRLLLQS…RLTYHGVSPC (62 aa). S348 is modified (phosphoserine). Residue C350 coordinates Zn(2+). A coiled-coil region spans residues 351 to 395; the sequence is KVTAEKLMDLRNEYLQADEANKRLLDQRYGKRVIQKALEEMESKE. Residues 361–474 form an interaction with androgen receptor region; it reads RNEYLQADEA…DDIWEDEVED (114 aa). Positions 404 and 407 each coordinate Zn(2+). Residues 404–433 form an RING-type 2; atypical zinc finger; that stretch reads CPCCGTPIEKLDGCNKMTCTGCMQYFCWIC. C417 is a catalytic residue. 6 residues coordinate Zn(2+): C422, C425, C430, C433, H445, and C453.

Belongs to the RBR family. RNF14 subfamily. As to quaternary structure, interacts with GCN1; interaction takes place in response to ribosome collisions and is required for ubiquitination of EEF1A1/eEF1A. Interacts with the ubiquitin-conjugating enzymes UBE2E1 and UBE2E2. Interacts with AR/androgen receptor. Interacts with TCF7/TCF1, TCF7L1/TCF3 and TCF7L2/TCF4; promoting Wnt signaling. In terms of processing, RING-type zinc finger-dependent and UBE2E2-dependent autoubiquitination. As to expression, widely expressed.

Its subcellular location is the cytoplasm. The protein resides in the nucleus. It carries out the reaction [E2 ubiquitin-conjugating enzyme]-S-ubiquitinyl-L-cysteine + [acceptor protein]-L-lysine = [E2 ubiquitin-conjugating enzyme]-L-cysteine + [acceptor protein]-N(6)-ubiquitinyl-L-lysine.. It functions in the pathway protein modification; protein ubiquitination. E3 ubiquitin-protein ligase that plays a key role in the RNF14-RNF25 translation quality control pathway, a pathway that takes place when a ribosome has stalled during translation, and which promotes ubiquitination and degradation of translation factors on stalled ribosomes. Recruited to stalled ribosomes by the ribosome collision sensor GCN1 and mediates 'Lys-6'-linked ubiquitination of target proteins, leading to their degradation. Mediates ubiquitination of EEF1A1/eEF1A and ETF1/eRF1 translation factors on stalled ribosomes, leading to their degradation. Also catalyzes ubiquitination of ribosomal proteins RPL0, RPL1, RPL12, RPS13 and RPS17. Specifically required to resolve RNA-protein cross-links caused by reactive aldehydes, which trigger translation stress by stalling ribosomes: acts by catalying 'Lys-6'-linked ubiquitination of RNA-protein cross-links, leading to their removal by the ATP-dependent unfoldase VCP and subsequent degradation by the proteasome. Independently of its function in the response to stalled ribosomes, acts as a regulator of transcription in Wnt signaling via its interaction with TCF transcription factors (TCF7/TCF1, TCF7L1/TCF3 and TCF7L2/TCF4). May also play a role as a coactivator for androgen- and, to a lesser extent, progesterone-dependent transcription. The polypeptide is E3 ubiquitin-protein ligase RNF14 (Homo sapiens (Human)).